The primary structure comprises 94 residues: Transcription factor CPC (94 aa).

The interval 1 to 10 (MFRSDKAEKM) is S1, required for cell-to-cell movements. Over residues 1-11 (MFRSDKAEKMD) the composition is skewed to basic and acidic residues. The segment at 1 to 25 (MFRSDKAEKMDKRRRRQSKAKASCS) is disordered. Residues 30–80 (SIEWEAVKMSEEEEDLISRMYKLVGDRWELIAGRIPGRTPEEIERYWLMKH) form the Myb-like domain. Residues 76 to 79 (WLMK) are S2, required for cell-to-cell movements and nuclear localization.

As to quaternary structure, interacts with GL3 and BHLH2. Interacts with SIEL. Expressed in trichomes and in young developing leaves, as well as in root hair and stele cells (pericycle and vascular tissues). Expressed in epidermal root hairless cells (atrichoblasts) and moves to root hair cells (trichoblasts) by a cell-to-cell movement through plasmodesmata (at protein level).

Its subcellular location is the nucleus. Transcription factor. Determines the fate of epidermal cell differentiation. Represses trichome development by lateral inhibition. Together with GL3 or BHLH2, promotes the formation of hair developing cells (H position) in root epidermis, probably by inhibiting non-hair cell formation. Represses the expression of GL2 and WER in H cells. Positively regulates stomatal formation in the hypocotyl. In Arabidopsis thaliana (Mouse-ear cress), this protein is Transcription factor CPC (CPC).